The chain runs to 430 residues: 3-phosphoshikimate 1-carboxyvinyltransferase (430 aa).

The disordered stretch occupies residues 1-20 (MHATVSPSRVRGRARAPPSK). 3-phosphoshikimate contacts are provided by lysine 20, serine 21, and arginine 25. Lysine 20 is a binding site for phosphoenolpyruvate. Residues glycine 91 and arginine 119 each contribute to the phosphoenolpyruvate site. The 3-phosphoshikimate site is built by serine 164, serine 165, glutamine 166, serine 192, aspartate 312, and lysine 339. Glutamine 166 serves as a coordination point for phosphoenolpyruvate. Aspartate 312 serves as the catalytic Proton acceptor. 2 residues coordinate phosphoenolpyruvate: arginine 343 and arginine 386.

Belongs to the EPSP synthase family. As to quaternary structure, monomer.

It is found in the cytoplasm. It carries out the reaction 3-phosphoshikimate + phosphoenolpyruvate = 5-O-(1-carboxyvinyl)-3-phosphoshikimate + phosphate. It functions in the pathway metabolic intermediate biosynthesis; chorismate biosynthesis. Functionally, catalyzes the transfer of the enolpyruvyl moiety of phosphoenolpyruvate (PEP) to the 5-hydroxyl of shikimate-3-phosphate (S3P) to produce enolpyruvyl shikimate-3-phosphate and inorganic phosphate. This is 3-phosphoshikimate 1-carboxyvinyltransferase from Halobacterium salinarum (strain ATCC 29341 / DSM 671 / R1).